The chain runs to 471 residues: Putative multidrug resistance protein MdtD (471 aa).

Residues 1–11 (MTDLPDSTRWQ) lie on the Periplasmic side of the membrane. A helical membrane pass occupies residues 12–32 (LWIVAFGFFMQSLDTTIVNTA). At 33 to 48 (LPSMAQSLGESPLHMH) the chain is on the cytoplasmic side. Residues 49 to 69 (MVIVSYVLTVAVMLPASGWLA) form a helical membrane-spanning segment. Residues 70–76 (DKVGVRN) are Periplasmic-facing. A helical membrane pass occupies residues 77–97 (IFFTAIVLFTLGSLFCALSGT). The Cytoplasmic segment spans residues 98–101 (LNEL). Residues 102–124 (LLARALQGVGGAMMVPVGRLTVM) traverse the membrane as a helical segment. Residues 125-137 (KIVPREQYMAAMT) are Periplasmic-facing. The helical transmembrane segment at 138–158 (FVTLPGQVGPLLGPALGGLLV) threads the bilayer. The Cytoplasmic portion of the chain corresponds to 159–164 (EYASWH). Residues 165–185 (WIFLINIPVGIIGAIATLMLM) traverse the membrane as a helical segment. Residues 186–196 (PNYTMQTRRFD) lie on the Periplasmic side of the membrane. The helical transmembrane segment at 197 to 217 (LSGFLLLAVGMAVLTLALDGS) threads the bilayer. Residues 218-224 (KGTGLSP) are Cytoplasmic-facing. A helical membrane pass occupies residues 225–245 (LAIAGLVAVGVVALVLYLLHA). At 246–262 (RNNNRALFSLKLFRTRT) the chain is on the periplasmic side. The helical transmembrane segment at 263-283 (FSLGLAGSFAGRIGSGMLPFM) threads the bilayer. Over 284–285 (TP) the chain is Cytoplasmic. Residues 286-306 (VFLQIGLGFSPFHAGLMMIPM) traverse the membrane as a helical segment. Residues 307-341 (VLGSMGMKRIVVQVVNRFGYRRVLVATTLGLSLVT) are Periplasmic-facing. A helical transmembrane segment spans residues 342–362 (LLFMTTALLGWYYVLPFVLFL). Over 363–395 (QGMVNSTRFSSMNTLTLKDLPDNLASSGNSLLS) the chain is Cytoplasmic. Residues 396–416 (MIMQLSMSIGVTIAGLLLGLF) form a helical membrane-spanning segment. Over 417 to 430 (GSQHVSVDSGTTQT) the chain is Periplasmic. The helical transmembrane segment at 431 to 451 (VFMYTWLSMAFIIALPAFIFA) threads the bilayer. Residues 452 to 471 (RVPNDTHQNVAISRRKRSAQ) are Cytoplasmic-facing.

The protein belongs to the major facilitator superfamily. TCR/Tet family.

The protein resides in the cell inner membrane. The sequence is that of Putative multidrug resistance protein MdtD from Escherichia coli (strain SMS-3-5 / SECEC).